The sequence spans 167 residues: Transcription initiation factor TFIID subunit 10 (167 aa).

Disordered stretches follow at residues 1–56 (MASD…EESE) and 119–139 (TTNI…NPKD). Acidic residues predominate over residues 41–56 (EQPDVEEVPLTTEESE). Residues 130-139 (SSKDKKNPKD) are compositionally biased toward basic and acidic residues.

The protein belongs to the TAF10 family. In terms of assembly, belongs to the TFIID complex which is composed of TATA binding protein (Tbp) and a number of TBP-associated factors (TAFs). Also a member of the histone acetylase (HAT) complex. At embryonic stage 9, highest expression is detected within the ectoderm, ventral chord, and anterior foregut primordium. Later in development preferential expression is in the foregut, proventriculus, and central nervous system. Coexpressed with Taf10b in the lateral epidermis and anal plate.

Its subcellular location is the cytoplasm. The protein localises to the nucleus. Functionally, TFIID is a multimeric protein complex that plays a central role in mediating promoter responses to various activators and repressors. The sequence is that of Transcription initiation factor TFIID subunit 10 from Drosophila melanogaster (Fruit fly).